Consider the following 350-residue polypeptide: Anthranilate phosphoribosyltransferase (350 aa).

Residues Gly-94, 97-98 (GD), Thr-102, 104-107 (NIST), 122-130 (KHGNRSVSS), and Ser-134 contribute to the 5-phospho-alpha-D-ribose 1-diphosphate site. Anthranilate is bound at residue Gly-94. Mg(2+) is bound at residue Ser-106. Asn-125 provides a ligand contact to anthranilate. Arg-180 is an anthranilate binding site. Mg(2+) is bound by residues Asp-239 and Glu-240.

This sequence belongs to the anthranilate phosphoribosyltransferase family. Homodimer. Mg(2+) serves as cofactor.

It catalyses the reaction N-(5-phospho-beta-D-ribosyl)anthranilate + diphosphate = 5-phospho-alpha-D-ribose 1-diphosphate + anthranilate. It participates in amino-acid biosynthesis; L-tryptophan biosynthesis; L-tryptophan from chorismate: step 2/5. Its function is as follows. Catalyzes the transfer of the phosphoribosyl group of 5-phosphorylribose-1-pyrophosphate (PRPP) to anthranilate to yield N-(5'-phosphoribosyl)-anthranilate (PRA). This chain is Anthranilate phosphoribosyltransferase, found in Geotalea daltonii (strain DSM 22248 / JCM 15807 / FRC-32) (Geobacter daltonii).